Here is a 685-residue protein sequence, read N- to C-terminus: Acetate--CoA ligase [ADP-forming] I (685 aa).

The ATP-grasp domain occupies 477-513 (LPVLEAYGIEVAPYGIARNVDEARDIAESIGYPVVLK). 503–514 (AESIGYPVVLKV) is an ATP binding site.

It in the N-terminal section; belongs to the acetate CoA ligase alpha subunit family. This sequence in the C-terminal section; belongs to the acetate CoA ligase beta subunit family. As to quaternary structure, homodimer.

The catalysed reaction is acetate + ATP + CoA = acetyl-CoA + ADP + phosphate. With respect to regulation, activity requires divalent metal cations. Catalyzes the reversible formation of acetate and ATP from acetyl-CoA by using ADP and phosphate. Can use other substrates such as propionyl-CoA and butyryl-CoA, but not phenylacetyl-CoA. Seems to be involved primarily in the conversion of acetyl-CoA to acetate. Participates in the degradation of branched-chain amino acids via branched-chain-acyl-CoA esters. In Archaeoglobus fulgidus (strain ATCC 49558 / DSM 4304 / JCM 9628 / NBRC 100126 / VC-16), this protein is Acetate--CoA ligase [ADP-forming] I.